We begin with the raw amino-acid sequence, 440 residues long: Protein EFFECTOR OF TRANSCRIPTION (440 aa).

In terms of domain architecture, GIY-YIG spans 131 to 167 (SIQGLGVAVNIHDADDISHGQTESIRTRLRSYGRPVP). Positions 172–216 (LGDNASQTITQKKTGGRSKDKKHGFEEERDVSRVEAEENNTNSVH) are disordered. The span at 175 to 184 (NASQTITQKK) shows a compositional bias: polar residues. A compositionally biased stretch (basic and acidic residues) spans 194 to 207 (HGFEEERDVSRVEA). Cx9Cx9RCx2HK repeat units follow at residues 247-272 (CGVL…TEHK) and 295-320 (CGVI…EDHK). The interval 339–363 (ILKEDKSKPKTRTSSTNQEEPGESL) is disordered. Cx9Cx9RCx2HK repeat units lie at residues 365-390 (CEAT…WQHK) and 409-434 (CGVK…QEHK).

Its subcellular location is the nucleus. Functionally, transcription regulator that negatively modulates gibberellin-mediated developmental processes. May act as transcriptional repressor of giberellin controlled genes. Binds DNA without sequence preference. The chain is Protein EFFECTOR OF TRANSCRIPTION from Brassica napus (Rape).